Consider the following 430-residue polypeptide: 3-phosphoshikimate 1-carboxyvinyltransferase (430 aa).

Residues lysine 20, serine 21, and arginine 25 each contribute to the 3-phosphoshikimate site. Lysine 20 is a binding site for phosphoenolpyruvate. Phosphoenolpyruvate contacts are provided by glycine 90 and arginine 118. The 3-phosphoshikimate site is built by serine 163, serine 164, glutamine 165, serine 191, aspartate 311, and lysine 338. Glutamine 165 is a binding site for phosphoenolpyruvate. The active-site Proton acceptor is aspartate 311. The phosphoenolpyruvate site is built by arginine 342 and arginine 383.

This sequence belongs to the EPSP synthase family. As to quaternary structure, monomer.

The protein localises to the cytoplasm. It carries out the reaction 3-phosphoshikimate + phosphoenolpyruvate = 5-O-(1-carboxyvinyl)-3-phosphoshikimate + phosphate. It functions in the pathway metabolic intermediate biosynthesis; chorismate biosynthesis. In terms of biological role, catalyzes the transfer of the enolpyruvyl moiety of phosphoenolpyruvate (PEP) to the 5-hydroxyl of shikimate-3-phosphate (S3P) to produce enolpyruvyl shikimate-3-phosphate and inorganic phosphate. The polypeptide is 3-phosphoshikimate 1-carboxyvinyltransferase (Methanosarcina mazei (strain ATCC BAA-159 / DSM 3647 / Goe1 / Go1 / JCM 11833 / OCM 88) (Methanosarcina frisia)).